The primary structure comprises 288 residues: Protoheme IX farnesyltransferase (288 aa).

Transmembrane regions (helical) follow at residues 8–28, 35–55, 80–100, 107–127, 132–152, 162–182, 208–228, 229–249, and 266–286; these read ATKP…FLLA, YLIF…GCVL, ISIL…IYLL, LTML…TKCM, IYST…GYCA, LLLL…IAIL, IVIY…SGYT, TSYQ…YLAL, and FIFS…DSIF.

Belongs to the UbiA prenyltransferase family. Protoheme IX farnesyltransferase subfamily.

The protein resides in the cell membrane. It catalyses the reaction heme b + (2E,6E)-farnesyl diphosphate + H2O = Fe(II)-heme o + diphosphate. Its pathway is porphyrin-containing compound metabolism; heme O biosynthesis; heme O from protoheme: step 1/1. Converts heme B (protoheme IX) to heme O by substitution of the vinyl group on carbon 2 of heme B porphyrin ring with a hydroxyethyl farnesyl side group. This is Protoheme IX farnesyltransferase from Baumannia cicadellinicola subsp. Homalodisca coagulata.